The sequence spans 197 residues: Thymidylate kinase (197 aa).

7–14 (GIDGSGKS) serves as a coordination point for ATP.

This sequence belongs to the thymidylate kinase family.

The catalysed reaction is dTMP + ATP = dTDP + ADP. Its function is as follows. Phosphorylation of dTMP to form dTDP in both de novo and salvage pathways of dTTP synthesis. The chain is Thymidylate kinase from Thermotoga petrophila (strain ATCC BAA-488 / DSM 13995 / JCM 10881 / RKU-1).